The following is a 468-amino-acid chain: 6-phospho-beta-galactosidase (468 aa).

Positions 19, 116, 159, 160, and 297 each coordinate D-galactose 6-phosphate. Catalysis depends on E160, which acts as the Proton donor. E375 serves as the catalytic Nucleophile. S428, W429, K435, and Y437 together coordinate D-galactose 6-phosphate.

The protein belongs to the glycosyl hydrolase 1 family.

It carries out the reaction a 6-phospho-beta-D-galactoside + H2O = D-galactose 6-phosphate + an alcohol. It functions in the pathway carbohydrate metabolism; lactose degradation; D-galactose 6-phosphate and beta-D-glucose from lactose 6-phosphate: step 1/1. The protein is 6-phospho-beta-galactosidase of Streptococcus pyogenes serotype M3 (strain ATCC BAA-595 / MGAS315).